The following is a 242-amino-acid chain: Ribonuclease 3 (242 aa).

The region spanning 18–146 (APAIEAKLGY…IIGAIYLDGG (129 aa)) is the RNase III domain. A Mg(2+)-binding site is contributed by Glu59. The active site involves Asp63. The Mg(2+) site is built by Asp132 and Glu135. The active site involves Glu135. Residues 172–241 (NWKALLQDYC…AADALSRVEL (70 aa)) enclose the DRBM domain. Basic and acidic residues predominate over residues 218–227 (RGKGTSKKEA). The interval 218–242 (RGKGTSKKEAQQAAAADALSRVELP) is disordered.

It belongs to the ribonuclease III family. In terms of assembly, homodimer. Requires Mg(2+) as cofactor.

It is found in the cytoplasm. It carries out the reaction Endonucleolytic cleavage to 5'-phosphomonoester.. Its function is as follows. Digests double-stranded RNA. Involved in the processing of primary rRNA transcript to yield the immediate precursors to the large and small rRNAs (23S and 16S). Processes some mRNAs, and tRNAs when they are encoded in the rRNA operon. Processes pre-crRNA and tracrRNA of type II CRISPR loci if present in the organism. In Protochlamydia amoebophila (strain UWE25), this protein is Ribonuclease 3.